The sequence spans 166 residues: Ribosome-binding factor A (166 aa).

Residues 122–166 (LASTAEHAGDADPYRVDTEDDDDDTDGADAEARSDADVRRGPQSG) form a disordered region. Basic and acidic residues predominate over residues 128-138 (HAGDADPYRVD). Over residues 139–150 (TEDDDDDTDGAD) the composition is skewed to acidic residues. Residues 151–166 (AEARSDADVRRGPQSG) are compositionally biased toward basic and acidic residues.

This sequence belongs to the RbfA family. Monomer. Binds 30S ribosomal subunits, but not 50S ribosomal subunits or 70S ribosomes.

The protein localises to the cytoplasm. Its function is as follows. One of several proteins that assist in the late maturation steps of the functional core of the 30S ribosomal subunit. Associates with free 30S ribosomal subunits (but not with 30S subunits that are part of 70S ribosomes or polysomes). Required for efficient processing of 16S rRNA. May interact with the 5'-terminal helix region of 16S rRNA. This is Ribosome-binding factor A from Saccharopolyspora erythraea (strain ATCC 11635 / DSM 40517 / JCM 4748 / NBRC 13426 / NCIMB 8594 / NRRL 2338).